The primary structure comprises 201 residues: 3-isopropylmalate dehydratase small subunit (201 aa).

Belongs to the LeuD family. LeuD type 1 subfamily. Heterodimer of LeuC and LeuD.

It carries out the reaction (2R,3S)-3-isopropylmalate = (2S)-2-isopropylmalate. It functions in the pathway amino-acid biosynthesis; L-leucine biosynthesis; L-leucine from 3-methyl-2-oxobutanoate: step 2/4. Its function is as follows. Catalyzes the isomerization between 2-isopropylmalate and 3-isopropylmalate, via the formation of 2-isopropylmaleate. The chain is 3-isopropylmalate dehydratase small subunit from Shewanella sp. (strain MR-4).